A 450-amino-acid chain; its full sequence is Saccharopine dehydrogenase [NADP(+), L-glutamate-forming] (450 aa).

NADP(+) is bound by residues 11 to 14 (SGFV), 33 to 35 (CRT), 55 to 56 (DV), Ile-76, 98 to 99 (TS), 125 to 127 (LDP), and Ser-175. L-saccharopine contacts are provided by residues 99-100 (SY) and Asp-126. L-saccharopine contacts are provided by residues Arg-224 and 245 to 247 (TLR).

The protein belongs to the saccharopine dehydrogenase family. In terms of assembly, homodimer.

It carries out the reaction L-saccharopine + NADP(+) + H2O = (S)-2-amino-6-oxohexanoate + L-glutamate + NADPH + H(+). The protein operates within amino-acid biosynthesis; L-lysine biosynthesis via AAA pathway; L-lysine from L-alpha-aminoadipate (fungal route): step 2/3. The polypeptide is Saccharopine dehydrogenase [NADP(+), L-glutamate-forming] (LYS3) (Pyricularia oryzae (strain 70-15 / ATCC MYA-4617 / FGSC 8958) (Rice blast fungus)).